Here is a 262-residue protein sequence, read N- to C-terminus: Thiazole synthase (262 aa).

Catalysis depends on lysine 97, which acts as the Schiff-base intermediate with DXP. 1-deoxy-D-xylulose 5-phosphate is bound by residues glycine 158, 185–186 (AG), and 207–208 (NT). Positions 243–262 (DKAQASTPTVGQPFWHSAEY) are disordered.

The protein belongs to the ThiG family. As to quaternary structure, homotetramer. Forms heterodimers with either ThiH or ThiS.

It is found in the cytoplasm. The enzyme catalyses [ThiS sulfur-carrier protein]-C-terminal-Gly-aminoethanethioate + 2-iminoacetate + 1-deoxy-D-xylulose 5-phosphate = [ThiS sulfur-carrier protein]-C-terminal Gly-Gly + 2-[(2R,5Z)-2-carboxy-4-methylthiazol-5(2H)-ylidene]ethyl phosphate + 2 H2O + H(+). It participates in cofactor biosynthesis; thiamine diphosphate biosynthesis. In terms of biological role, catalyzes the rearrangement of 1-deoxy-D-xylulose 5-phosphate (DXP) to produce the thiazole phosphate moiety of thiamine. Sulfur is provided by the thiocarboxylate moiety of the carrier protein ThiS. In vitro, sulfur can be provided by H(2)S. The chain is Thiazole synthase from Neisseria meningitidis serogroup A / serotype 4A (strain DSM 15465 / Z2491).